A 152-amino-acid polypeptide reads, in one-letter code: Phosphoribosyl-AMP cyclohydrolase (152 aa).

Asp92 contributes to the Mg(2+) binding site. Zn(2+) is bound at residue Cys93. Asp94 and Asp96 together coordinate Mg(2+). Zn(2+)-binding residues include Cys111 and Cys118.

This sequence belongs to the PRA-CH family. Homodimer. The cofactor is Mg(2+). Zn(2+) is required as a cofactor.

It is found in the cytoplasm. It catalyses the reaction 1-(5-phospho-beta-D-ribosyl)-5'-AMP + H2O = 1-(5-phospho-beta-D-ribosyl)-5-[(5-phospho-beta-D-ribosylamino)methylideneamino]imidazole-4-carboxamide. The protein operates within amino-acid biosynthesis; L-histidine biosynthesis; L-histidine from 5-phospho-alpha-D-ribose 1-diphosphate: step 3/9. Its function is as follows. Catalyzes the hydrolysis of the adenine ring of phosphoribosyl-AMP. This is Phosphoribosyl-AMP cyclohydrolase from Sinorhizobium fredii (strain NBRC 101917 / NGR234).